Consider the following 1130-residue polypeptide: Sodium/potassium/calcium exchanger 1 (1130 aa).

Topologically, residues 1 to 419 (MGKLIRMGTQ…DLFSVEDRRQ (419 aa)) are extracellular. Residues 104–209 (PSIAMEDTPN…SPTATVRDRE (106 aa)) are disordered. Positions 125 to 136 (LKNSYSPTTAGT) are enriched in polar residues. A compositionally biased stretch (basic and acidic residues) spans 170-187 (PRGERKNSSPTHAREKGR). 2 N-linked (GlcNAc...) asparagine glycosylation sites follow: Asn176 and Asn273. The segment at 274–295 (ISTTPQGAVPQHTPATSEEQMT) is disordered. Residues 286 to 295 (TPATSEEQMT) show a composition bias toward polar residues. A helical transmembrane segment spans residues 420 to 440 (GWVVLHIFGMMYVFVALAIVC). Residues 441 to 464 (DEYFVPALGVITHKLQISEDVAGA) are Cytoplasmic-facing. One copy of the Alpha-1 repeat lies at 461-501 (VAGATFMAAGGSAPELFTSLIGVFISHSNVGIGTIVGSAVF). Residues 465–485 (TFMAAGGSAPELFTSLIGVFI) traverse the membrane as a helical segment. The Extracellular segment spans residues 486–489 (SHSN). Residues 490–510 (VGIGTIVGSAVFNILFVIGTC) form a helical membrane-spanning segment. At 511 to 530 (ALFSREILNLTWWPLFRDVS) the chain is on the cytoplasmic side. A helical transmembrane segment spans residues 531 to 551 (FYILDLSMLIVFFLDSFIAWW). Glu552 is a topological domain (extracellular). The chain crosses the membrane as a helical span at residues 553–573 (SLLLLLAYALYVFTMKWNKQI). Over 574–938 (ELWVKEQLSR…SLEWPDSRQK (365 aa)) the chain is Cytoplasmic. Residues 598–619 (PSEDAVEENEQQDSKKLKLPSV) form a disordered region. Residue Ser625 is modified to Phosphoserine. The segment at 650-932 (GEARPSKDKQ…ENEEPLSLEW (283 aa)) is disordered. Positions 661-675 (SLNQEARVLSQTKAE) are enriched in polar residues. A Phosphothreonine modification is found at Thr690. Residues 703–715 (QEDDPGCQEDVDE) show a composition bias toward acidic residues. A compositionally biased stretch (basic and acidic residues) spans 730-751 (ETETEGKKDEQEGETEAERKED). Acidic residues-rich tracts occupy residues 766–782 (GETEAEGKEDEQEGETE) and 802–820 (QEGETEAEGKEDEQEGETE). The span at 833-855 (AESKEVEQERETEAEGKDKHEGQ) shows a compositional bias: basic and acidic residues. 2 stretches are compositionally biased toward acidic residues: residues 870-880 (GETEANAEDQC) and 896-928 (DGGDSEEEEDEEDEEEEEEEDEEEEEEENEEPL). A helical transmembrane segment spans residues 939-959 (QAIYLFLLPIVFPLWLTIPDV). Topologically, residues 960-966 (RRQESRK) are extracellular. A helical transmembrane segment spans residues 967 to 987 (FFVITFLGSIIWIAMFSYLMV). Over 988-1002 (WWAHQVGETIGISEE) the chain is Cytoplasmic. The helical transmembrane segment at 1003 to 1023 (IMGLTILAAGTSIPDLITSVI) threads the bilayer. The Alpha-2 repeat unit spans residues 1010–1041 (AAGTSIPDLITSVIVARKGLGDMAVSSSVGSN). Topologically, residues 1024 to 1041 (VARKGLGDMAVSSSVGSN) are extracellular. The helical transmembrane segment at 1042–1062 (IFDITVGLPVPWLLFSLINAL) threads the bilayer. Topologically, residues 1063 to 1070 (QPVPVSSN) are cytoplasmic. The chain crosses the membrane as a helical span at residues 1071-1091 (GLFCAIVLLFLMLLFVIFSIA). Residues 1092–1099 (SCKWRMNK) are Extracellular-facing. Residues 1100-1120 (ILGFTMFLLYFVFLVISVMLE) form a helical membrane-spanning segment. Residues 1121–1130 (DRIISCPVSV) are Cytoplasmic-facing.

Belongs to the Ca(2+):cation antiporter (CaCA) (TC 2.A.19) family. SLC24A subfamily. Post-translationally, the uncleaved signal sequence is required for efficient membrane targeting and proper membrane integration and topology.

Its subcellular location is the cell membrane. It carries out the reaction Ca(2+)(out) + K(+)(out) + 4 Na(+)(in) = Ca(2+)(in) + K(+)(in) + 4 Na(+)(out). Functionally, calcium, potassium:sodium antiporter that transports 1 Ca(2+) and 1 K(+) in exchange for 4 Na(+). Critical component of the visual transduction cascade, controlling the calcium concentration of outer segments during light and darkness. Light causes a rapid lowering of cytosolic free calcium in the outer segment of both retinal rod and cone photoreceptors and the light-induced lowering of calcium is caused by extrusion via this protein which plays a key role in the process of light adaptation. This is Sodium/potassium/calcium exchanger 1 from Mus musculus (Mouse).